Consider the following 448-residue polypeptide: N-succinylarginine dihydrolase (448 aa).

Residues 19-28 (GGLSYGNVAS), asparagine 110, and 137-138 (HR) contribute to the substrate site. Residue glutamate 174 is part of the active site. Arginine 214 provides a ligand contact to substrate. Residue histidine 250 is part of the active site. 2 residues coordinate substrate: aspartate 252 and asparagine 365. Cysteine 371 (nucleophile) is an active-site residue.

It belongs to the succinylarginine dihydrolase family. As to quaternary structure, homodimer.

It catalyses the reaction N(2)-succinyl-L-arginine + 2 H2O + 2 H(+) = N(2)-succinyl-L-ornithine + 2 NH4(+) + CO2. Its pathway is amino-acid degradation; L-arginine degradation via AST pathway; L-glutamate and succinate from L-arginine: step 2/5. Catalyzes the hydrolysis of N(2)-succinylarginine into N(2)-succinylornithine, ammonia and CO(2). In Pseudomonas aeruginosa (strain LESB58), this protein is N-succinylarginine dihydrolase.